The chain runs to 105 residues: Small ribosomal subunit protein uS10 (105 aa).

Belongs to the universal ribosomal protein uS10 family. In terms of assembly, part of the 30S ribosomal subunit.

Functionally, involved in the binding of tRNA to the ribosomes. The polypeptide is Small ribosomal subunit protein uS10 (Rickettsia conorii (strain ATCC VR-613 / Malish 7)).